A 379-amino-acid polypeptide reads, in one-letter code: Chaperone protein DnaJ (379 aa).

The J domain occupies 5–69; sequence DYYEVLGISK…NKRASYDQFG (65 aa). Residues 136-218 form a CR-type zinc finger; the sequence is GTTKEISIRK…CHGKGTENKT (83 aa). Positions 149, 152, 166, 169, 192, 195, 206, and 209 each coordinate Zn(2+). CXXCXGXG motif repeat units lie at residues 149–156, 166–173, 192–199, and 206–213; these read CETCHGDG, CSYCNGAG, CPKCNGSG, and CPTCHGKG.

The protein belongs to the DnaJ family. As to quaternary structure, homodimer. Zn(2+) is required as a cofactor.

It localises to the cytoplasm. In terms of biological role, participates actively in the response to hyperosmotic and heat shock by preventing the aggregation of stress-denatured proteins and by disaggregating proteins, also in an autonomous, DnaK-independent fashion. Unfolded proteins bind initially to DnaJ; upon interaction with the DnaJ-bound protein, DnaK hydrolyzes its bound ATP, resulting in the formation of a stable complex. GrpE releases ADP from DnaK; ATP binding to DnaK triggers the release of the substrate protein, thus completing the reaction cycle. Several rounds of ATP-dependent interactions between DnaJ, DnaK and GrpE are required for fully efficient folding. Also involved, together with DnaK and GrpE, in the DNA replication of plasmids through activation of initiation proteins. This Staphylococcus aureus (strain USA300 / TCH1516) protein is Chaperone protein DnaJ.